Here is a 186-residue protein sequence, read N- to C-terminus: Lipid A palmitoyltransferase PagP (186 aa).

The first 25 residues, 1-25 (MNVSKYVAIFFFVFIQLISVGKVFA), serve as a signal peptide directing secretion. Residues H58, D101, and S102 contribute to the active site.

It belongs to the lipid A palmitoyltransferase family. As to quaternary structure, homodimer.

It localises to the cell outer membrane. It catalyses the reaction lipid A (E. coli) + a 1-hexadecanoyl-2-acyl-sn-glycero-3-phosphocholine = hepta-acyl lipid A (E. coli) + a 2-acyl-sn-glycero-3-phosphocholine. The enzyme catalyses lipid IIA + a 1-hexadecanoyl-2-acyl-sn-glycero-3-phosphocholine = lipid IIB + a 2-acyl-sn-glycero-3-phosphocholine. The catalysed reaction is lipid IVA (E. coli) + a 1-hexadecanoyl-2-acyl-sn-glycero-3-phosphocholine = lipid IVB (E. coli) + a 2-acyl-sn-glycero-3-phosphocholine. In terms of biological role, transfers a palmitate residue from the sn-1 position of a phospholipid to the N-linked hydroxymyristate on the proximal unit of lipid A or its precursors. The polypeptide is Lipid A palmitoyltransferase PagP (Escherichia coli O6:H1 (strain CFT073 / ATCC 700928 / UPEC)).